A 1370-amino-acid chain; its full sequence is DNA-directed RNA polymerase subunit beta (1370 aa).

The protein belongs to the RNA polymerase beta chain family. The RNAP catalytic core consists of 2 alpha, 1 beta, 1 beta' and 1 omega subunit. When a sigma factor is associated with the core the holoenzyme is formed, which can initiate transcription.

The catalysed reaction is RNA(n) + a ribonucleoside 5'-triphosphate = RNA(n+1) + diphosphate. DNA-dependent RNA polymerase catalyzes the transcription of DNA into RNA using the four ribonucleoside triphosphates as substrates. This is DNA-directed RNA polymerase subunit beta from Verminephrobacter eiseniae (strain EF01-2).